A 367-amino-acid chain; its full sequence is CCN family member 4 (367 aa).

Positions 1-22 (MRWFLPWTLAAVTAAAASTVLA) are cleaved as a signal peptide. The IGFBP N-terminal domain occupies 45 to 118 (RPQFCKWPCE…RYAIGVCAQV (74 aa)). Intrachain disulfides connect C49–C73, C53–C75, C55–C76, and C62–C79. A glycan (N-linked (GlcNAc...) asparagine) is linked at N86. 2 disulfides stabilise this stretch: C87-C101 and C93-C115. In terms of domain architecture, VWFC spans 121–186 (VGCVLDGVRY…GHCCEQWVCE (66 aa)). Residue N143 is glycosylated (N-linked (GlcNAc...) asparagine). A TSP type-1 domain is found at 215-260 (NCIAYTSPWSPCSTSCGLGVSTRISNVNAQCWPEQESRLCNLRPCD). 5 disulfides stabilise this stretch: C273–C310, C290–C324, C301–C340, C304–C342, and C309–C346. Residues 273–347 (CLAVYQPEAS…NACFCNLSCR (75 aa)) enclose the CTCK domain. The N-linked (GlcNAc...) asparagine glycan is linked to N284. A glycan (N-linked (GlcNAc...) asparagine) is linked at N343.

The protein belongs to the CCN family. Expressed in heart, kidney, lung, pancreas, placenta, ovary, small intestine and spleen. Isoform 2 is expressed predominantly in scirrhous gastric carcinoma and, weakly in placenta. Overexpression is associated with several cancers including breast cancer and colon tumors. Isoform 2 is overexpressed in scirrhous gastric carcinoma.

It is found in the secreted. Downstream regulator in the Wnt/Frizzled-signaling pathway. Associated with cell survival. Attenuates p53-mediated apoptosis in response to DNA damage through activation of AKT kinase. Up-regulates the anti-apoptotic Bcl-X(L) protein. Adheres to skin and melanoma fibroblasts. In vitro binding to skin fibroblasts occurs through the proteoglycans, decorin and biglycan. This chain is CCN family member 4, found in Homo sapiens (Human).